A 513-amino-acid polypeptide reads, in one-letter code: MAAFLRCPLLARHPPLARAFATGARCPFMGFAHRAAPELQEDVERPQIPAVEVLEELLRDGGAALNRTVRDCMDEDAFPYEEQFQAQLGALRRTHTYRVVTAVGRRADAPPLGTRGTAPHTSVELWCSSDYLGLSRHPAVLRAARAALDAHGLGAGGTRNIGGTSPLHGALERALALLHRQPRAALFSSCFAANDTALDTLARILPGCQVYSDAGNHASMIQGIRRRGVPKFIFRHNDPHHLEQLLGRSPPGVPKIVAFESLHSMDGSIAPLEELCDVAHAYGALTFVDEVHAVGLYGARGAGIAERDGVQHKVDVVSGTLGKALGAVGGYIAGSEALVDAVRSLGPGFIFTTALPPQRGGGALAALQVVGSAEGAALRRAHQRHAKHLRVLLRDRGLPALPSHIVPVRWDAEANTRLSRALLEEHGLYVQAINHPTVPRGQELLLRIAPTPHHSPPMLENLADKLSECWGAVGLPREDPPGPSCSSCHRPLHLSLLSPLERDQFGVRGAAAG.

The transit peptide at 1 to 18 directs the protein to the mitochondrion; sequence MAAFLRCPLLARHPPLAR. Residue Arg98 participates in succinyl-CoA binding. Pyridoxal 5'-phosphate is bound by residues Cys190 and Phe191. Residues Ser212 and Lys231 each contribute to the succinyl-CoA site. Pyridoxal 5'-phosphate contacts are provided by Ser264, His292, and Thr320. Lys323 is a catalytic residue. Lys323 bears the N6-(pyridoxal phosphate)lysine mark. Residues Thr352 and Thr353 each contribute to the pyridoxal 5'-phosphate site. Thr437 is a binding site for succinyl-CoA.

It belongs to the class-II pyridoxal-phosphate-dependent aminotransferase family. In terms of assembly, homodimer. Pyridoxal 5'-phosphate is required as a cofactor. Erythroid-specific.

It localises to the mitochondrion inner membrane. It carries out the reaction succinyl-CoA + glycine + H(+) = 5-aminolevulinate + CO2 + CoA. Its pathway is porphyrin-containing compound metabolism; protoporphyrin-IX biosynthesis; 5-aminolevulinate from glycine: step 1/1. In terms of biological role, catalyzes the pyridoxal 5'-phosphate (PLP)-dependent condensation of succinyl-CoA and glycine to form aminolevulinic acid (ALA), with CoA and CO2 as by-products. Contributes significantly to heme formation during erythropoiesis. The polypeptide is 5-aminolevulinate synthase, erythroid-specific, mitochondrial (ALAS2) (Gallus gallus (Chicken)).